A 357-amino-acid polypeptide reads, in one-letter code: Elongation factor Ts (357 aa).

An involved in Mg(2+) ion dislocation from EF-Tu region spans residues 82 to 85; the sequence is TDFV.

It belongs to the EF-Ts family.

The protein localises to the cytoplasm. Its function is as follows. Associates with the EF-Tu.GDP complex and induces the exchange of GDP to GTP. It remains bound to the aminoacyl-tRNA.EF-Tu.GTP complex up to the GTP hydrolysis stage on the ribosome. The polypeptide is Elongation factor Ts (Campylobacter jejuni subsp. jejuni serotype O:6 (strain 81116 / NCTC 11828)).